The chain runs to 843 residues: MGFLSKIADGNKKEIKRLGKLADKVLALEEDMSILTDEEIKAKTSAFQEKLQSEEDIKKQNKILDDILPEAFALVREGSKRVFNMIPYKVQVMGGIAIHGGDISEMRTGEGKTLTATMPVYLNALTGRGVHVITVNEYLSSVQSQEMAELYEFLGLSVGLNLNSKTTTEKREAYACDITYCTNNELGFDYLRDNMVNYAEERVMRPLNFAIIDEVDSILIDEARTPLIISGEAEKSTSLYTQANVFAKMLKSEDDYNYDEKTKAVQLTEQGIDKAERMFKIDNLYDVNNVDVISHINTALRAHVTLQRDVDYMVNKGEVLIVDQFTGRTMPGRRFSEGLHQAIEAKEGVKIQNESKTMASITFQNYFRMYNKLSGMTGTAKTEEEEFRNIYNMTVTQIPTNKPVQRVDKPDLIYISQKGKFDAVVQDVIEKHKAGQPVLLGTVAVETSEYISNLLKKNGVRHDVLNAKNHEREADIVAGAGQRGAVTIATNMAGRGTDIKLGDGVQELGGLAVIGTERHESRRIDDQLRGRSGRQGDKGDSRFYLSLQDELMVRFGSERLQNMMNRLGMDDSTPIESKMVSRAVESAQKRVEGNNFDARKRVLEYDDVLRKQREIIYGERNSIIDSDESGGLVNDMLRSTLERSVNYYVNEEADDPDYEPFINYVDDVFLNEGDIKVEDIKGKDNEDIFEFVWNKVEIALKDQKEKIGTQFDEFERMILLRSIDTHWTDHIDTMDQLRQGIHLRSYGQQNPLRDYQNEGHQLFDTMMQNIEEDVSKYILKSVVSVEDDLERDKTTDFGKAEHVSAEDGKEKAKAEPYVKDEHIGRNDPCPCGSGKKYKNCHGA.

Residues Q91, 109-113 (GEGKT), and D498 contribute to the ATP site. Over residues 796–825 (DFGKAEHVSAEDGKEKAKAEPYVKDEHIGR) the composition is skewed to basic and acidic residues. The disordered stretch occupies residues 796–833 (DFGKAEHVSAEDGKEKAKAEPYVKDEHIGRNDPCPCGS). Residues C829, C831, C840, and H841 each contribute to the Zn(2+) site.

This sequence belongs to the SecA family. Monomer and homodimer. Part of the essential Sec protein translocation apparatus which comprises SecA, SecYEG and auxiliary proteins SecDF. Other proteins may also be involved. Zn(2+) is required as a cofactor.

The protein localises to the cell membrane. Its subcellular location is the cytoplasm. The catalysed reaction is ATP + H2O + cellular proteinSide 1 = ADP + phosphate + cellular proteinSide 2.. Its function is as follows. Part of the Sec protein translocase complex. Interacts with the SecYEG preprotein conducting channel. Has a central role in coupling the hydrolysis of ATP to the transfer of proteins into and across the cell membrane, serving as an ATP-driven molecular motor driving the stepwise translocation of polypeptide chains across the membrane. The chain is Protein translocase subunit SecA from Staphylococcus saprophyticus subsp. saprophyticus (strain ATCC 15305 / DSM 20229 / NCIMB 8711 / NCTC 7292 / S-41).